The primary structure comprises 754 residues: DNA repair protein RAD4 (754 aa).

The interval 23-51 (EKAPLSRRRRVRRKNQPLPDAKKKFKTGL) is disordered. A compositionally biased stretch (basic residues) spans 27–37 (LSRRRRVRRKN). The DNA-binding element occupies 250-269 (DFLRAVSKGHGDPDISVQGF). The segment at 701 to 754 (IANHEARPYSEPSEPEDSLDYVSVDKAEESATDDDVGEDYSDFMKELEMSEESD) is disordered. Positions 730–741 (SATDDDVGEDYS) are enriched in acidic residues.

This sequence belongs to the XPC family.

Its subcellular location is the cytoplasm. The protein resides in the nucleus. Functionally, involved in nucleotide excision repair of DNA damaged with UV light, bulky adducts, or cross-linking agents. The sequence is that of DNA repair protein RAD4 (RAD4) from Saccharomyces cerevisiae (strain ATCC 204508 / S288c) (Baker's yeast).